The chain runs to 229 residues: Heptaprenylglyceryl phosphate synthase (229 aa).

Residue Lys12 participates in sn-glycerol 1-phosphate binding. Mg(2+) is bound by residues Asp14 and Ser40. Residues Tyr159–Gly164, Gly189, and Gly209–Asn210 each bind sn-glycerol 1-phosphate.

Belongs to the GGGP/HepGP synthase family. Group I subfamily. Homodimer. It depends on Mg(2+) as a cofactor.

It catalyses the reaction sn-glycerol 1-phosphate + all-trans-heptaprenyl diphosphate = 3-heptaprenyl-sn-glycero-1-phosphate + diphosphate. Its pathway is membrane lipid metabolism; glycerophospholipid metabolism. Its function is as follows. Prenyltransferase that catalyzes in vivo the transfer of the heptaprenyl moiety of heptaprenyl pyrophosphate (HepPP; 35 carbon atoms) to the C3 hydroxyl of sn-glycerol-1-phosphate (G1P), producing heptaprenylglyceryl phosphate (HepGP). This reaction is an ether-bond-formation step in the biosynthesis of archaea-type G1P-based membrane lipids found in Bacillales. The protein is Heptaprenylglyceryl phosphate synthase of Bacillus mycoides (strain KBAB4) (Bacillus weihenstephanensis).